We begin with the raw amino-acid sequence, 265 residues long: tRNA pseudouridine synthase A (265 aa).

D53 functions as the Nucleophile in the catalytic mechanism. Y111 is a binding site for substrate.

The protein belongs to the tRNA pseudouridine synthase TruA family. In terms of assembly, homodimer.

The enzyme catalyses uridine(38/39/40) in tRNA = pseudouridine(38/39/40) in tRNA. In terms of biological role, formation of pseudouridine at positions 38, 39 and 40 in the anticodon stem and loop of transfer RNAs. This Acinetobacter baumannii (strain ACICU) protein is tRNA pseudouridine synthase A.